Reading from the N-terminus, the 293-residue chain is Ethanolamine ammonia-lyase small subunit (293 aa).

Adenosylcob(III)alamin contacts are provided by Val-207 and Glu-228.

It belongs to the EutC family. As to quaternary structure, the basic unit is a heterodimer which dimerizes to form tetramers. The heterotetramers trimerize; 6 large subunits form a core ring with 6 small subunits projecting outwards. Adenosylcob(III)alamin is required as a cofactor.

The protein localises to the bacterial microcompartment. The catalysed reaction is ethanolamine = acetaldehyde + NH4(+). Its pathway is amine and polyamine degradation; ethanolamine degradation. Functionally, catalyzes the deamination of various vicinal amino-alcohols to oxo compounds. Allows this organism to utilize ethanolamine as the sole source of nitrogen and carbon in the presence of external vitamin B12. The sequence is that of Ethanolamine ammonia-lyase small subunit from Listeria monocytogenes serotype 4b (strain CLIP80459).